Consider the following 615-residue polypeptide: MCFPGSQISPARLYYLVSAPWICTGSLTSSRLPRRRESGPLRVPPRSVQAERILRLPAFGLPLLALLLVPLLPVRAQNPDAKVVSMGVEWLTRYGYLPPADPVHAQMQSLEKLQDAIKVMQRFAGLPETGQMDPMTIKTMRKPRCSLPDVLGAAGLVRRRRRYSLSGSVWKKRTLTWSIRSFSQKSQLSPQIVRTLLSYALAVWATESGLTFQEVNSQYQEPDIIIHFARAYHQDSYPFDGSGGTLAHAFFPGEHPISGDTHFDDEETWTFGSTDDNGIDLFAVAVHEFGHALGLGHSSAPNSIMRPFYQGPVGDPATYRLPQDDRDGLQQLYGRVSQNPNARPTRKPLVPPPQPPAMPPDSPATPVPDRCEGNFDAVANIRGEIFLFKGPWFWRLQPSGQLVSPRPAGLHRFWEGLPTHVKVIQAAYARPLDGRIILFSGPQFWVFQERQLEGAARPLVEFGLPPGEDVDAVFSWPHNGKTYLIRGQKYWRYDEVAARPDPGYPRALSLWDGAPFAPDDVTISNTGDTYFFKGTHFWRFAEGSVKAESDSPQPIGPKWLDCPAPNSDPRVTSPPKTTSKTRSCDCHCELNQASEQLSPLLLPLLPLVAGEVFSY.

A propeptide spanning residues 1–162 (MCFPGSQISP…AAGLVRRRRR (162 aa)) is cleaved from the precursor. Residues 53 to 73 (ILRLPAFGLPLLALLLVPLLP) traverse the membrane as a helical segment. The short motif at 143 to 150 (PRCSLPDV) is the Cysteine switch element. Residues Cys145 and His287 each coordinate Zn(2+). Residue Glu288 is part of the active site. Residues His291 and His297 each coordinate Zn(2+). The disordered stretch occupies residues 336-366 (VSQNPNARPTRKPLVPPPQPPAMPPDSPATP). Over residues 349 to 366 (LVPPPQPPAMPPDSPATP) the composition is skewed to pro residues. Hemopexin repeat units lie at residues 368 to 417 (PDRC…WEGL), 421 to 466 (VKVI…GLPP), 467 to 515 (GEDV…DGAP), and 516 to 562 (FAPD…WLDC). An intrachain disulfide couples Cys371 to Cys562. The interval 547 to 582 (AESDSPQPIGPKWLDCPAPNSDPRVTSPPKTTSKTR) is disordered. Ala593 carries the GPI-anchor amidated alanine lipid modification. The propeptide at 594-615 (SEQLSPLLLPLLPLVAGEVFSY) is removed in mature form.

It belongs to the peptidase M10A family. The cofactor is Zn(2+). Ca(2+) serves as cofactor. In terms of processing, the precursor is cleaved by a furin endopeptidase.

It localises to the cell membrane. May activate progelatinase A. This is Matrix metalloproteinase-25 (Mmp25) from Mus musculus (Mouse).